A 509-amino-acid chain; its full sequence is Protein root UVB sensitive 5 (509 aa).

The tract at residues 22-49 is disordered; it reads CQPKRRRVEHLRCSAQPSSIREDDEDAD.

It belongs to the RUS1 family.

The polypeptide is Protein root UVB sensitive 5 (Arabidopsis thaliana (Mouse-ear cress)).